The following is a 235-amino-acid chain: H2HPP isomerase (235 aa).

2 Cupin type-2 domains span residues 41-106 (VPPH…AIDI) and 151-216 (KIPG…KSIN). 8 residues coordinate a divalent metal cation: His-50, His-52, Gln-56, His-91, His-162, His-164, Gln-168, and His-202. Tyr-223 is a substrate binding site.

In terms of assembly, monomer. It depends on Fe(2+) as a cofactor. The cofactor is Co(2+).

It localises to the cytoplasm. It carries out the reaction 3-[(4R)-4-hydroxycyclohexa-1,5-dien-1-yl]-2-oxopropanoate = 3-[(1E,4R)-4-hydroxycyclohex-2-en-1-ylidene]pyruvate. The protein operates within antibiotic biosynthesis; bacilysin biosynthesis. In terms of biological role, part of the bacABCDEF operon responsible for the biosynthesis of the nonribosomally synthesized dipeptide antibiotic bacilysin, composed of L-alanine and L-anticapsin. Bacilysin is an irreversible inactivator of the glutaminase domain of glucosamine synthetase. BacB catalyzes the allylic isomerization of the endocyclic-delta(4),delta(8)-7R-dihydro-hydroxyphenylpyruvate (en-H2HPP) to generate a mixture of 3E,7R- and 3Z, 7R-olefins (E/Z ration of 3/1) of the exocyclic-delta(3),delta(5)-dihydro-hydroxyphenylpyruvate (ex-H2HPP). The sequence is that of H2HPP isomerase from Bacillus subtilis (strain 168).